Consider the following 1376-residue polypeptide: Zinc finger MYM-type protein 2 (1376 aa).

Residues 30–53 (NVGNSFSGPPNPLVSRSSKFQNSS) are compositionally biased toward polar residues. 2 disordered regions span residues 30–56 (NVGN…SVED) and 85–158 (TSSK…FSSS). Glycyl lysine isopeptide (Lys-Gly) (interchain with G-Cter in SUMO2) cross-links involve residues K48, K88, K98, and K104. The span at 127–138 (TNQGQEKSSSNF) shows a compositional bias: polar residues. The segment covering 139–152 (IERRPSETKNRTND) has biased composition (basic and acidic residues). Residues K147, K253, and K297 each participate in a glycyl lysine isopeptide (Lys-Gly) (interchain with G-Cter in SUMO2) cross-link. The disordered stretch occupies residues 269-304 (DVFQNGESAPHHNPDSWISQSASFPRNQKQQGVDSL). Residues 284 to 302 (SWISQSASFPRNQKQQGVD) show a composition bias toward polar residues. At S305 the chain carries Phosphoserine. Glycyl lysine isopeptide (Lys-Gly) (interchain with G-Cter in SUMO2) cross-links involve residues K312, K324, K347, and K365. An MYM-type 1 zinc finger spans residues 326 to 362 (VKVTCANCKKPLQKGQTAYQRKGSAHLFCSTTCLSSF). The segment at 368–408 (PKKLCVMCKKDITTMKGTIVAQVDSSESFQEFCSTSCLSLY) adopts an MYM-type 2 zinc-finger fold. Residues K416, K440, K490, K502, K512, K528, and K531 each participate in a glycyl lysine isopeptide (Lys-Gly) (interchain with G-Cter in SUMO2) cross-link. MYM-type zinc fingers lie at residues 420-455 (NKSR…FNRY) and 462-501 (IMNC…VTEY). Residues 532-569 (LTTCTGCRTQCRFFDMTQCIGPNGYMEPYCSTACMNSH) form an MYM-type 5 zinc finger. Glycyl lysine isopeptide (Lys-Gly) (interchain with G-Cter in SUMO2) cross-links involve residues K575, K602, K648, K657, K687, K699, and K708. Residues 635–670 (QLKCNYCKNSFCSKPEILEWENKVHQFCSKTCSDDY) form an MYM-type 6 zinc finger. 2 MYM-type zinc fingers span residues 722 to 757 (RCVT…CKKF) and 763 to 798 (KAAR…LLRF). Residues K763, K787, K811, and K828 each participate in a glycyl lysine isopeptide (Lys-Gly) (interchain with G-Cter in SUMO2) cross-link. Residue S837 is modified to Phosphoserine. A disordered region spans residues 1027–1063 (VFGEEYEEQPRPRSKKKGTKRKAVSGYQSHDDSSDNS). Residues 1038 to 1049 (PRSKKKGTKRKA) show a composition bias toward basic residues. Position 1063 is a phosphoserine (S1063). The residue at position 1375 (T1375) is a Phosphothreonine.

Can form homodimers. May be a component of a BHC histone deacetylase complex that contains HDAC1, HDAC2, HMG20B/BRAF35, KDM1A, RCOR1/CoREST, PHF21A/BHC80, ZMYM2, ZNF217, ZMYM3, GSE1 and GTF2I. Interacts with FOXP1 and FOXP2. Low but widespread expression is detected in the developing kidney.

The protein localises to the nucleus. In terms of biological role, involved in the negative regulation of transcription. The chain is Zinc finger MYM-type protein 2 (Zmym2) from Mus musculus (Mouse).